The following is a 263-amino-acid chain: tRNA uridine(34) hydroxylase (263 aa).

A Rhodanese domain is found at 129 to 223 (EGREVVTLDT…YFEETDGAFY (95 aa)). Residue C183 is the Cysteine persulfide intermediate of the active site.

This sequence belongs to the TrhO family.

It catalyses the reaction uridine(34) in tRNA + AH2 + O2 = 5-hydroxyuridine(34) in tRNA + A + H2O. Catalyzes oxygen-dependent 5-hydroxyuridine (ho5U) modification at position 34 in tRNAs. In Delftia acidovorans (strain DSM 14801 / SPH-1), this protein is tRNA uridine(34) hydroxylase.